A 227-amino-acid polypeptide reads, in one-letter code: Phosphoribosylformylglycinamidine synthase subunit PurQ (227 aa).

Residues 3 to 225 (FAVIVFPGSN…VKQGAHHVKT (223 aa)) form the Glutamine amidotransferase type-1 domain. The Nucleophile role is filled by cysteine 86. Catalysis depends on residues histidine 194 and glutamate 196.

As to quaternary structure, part of the FGAM synthase complex composed of 1 PurL, 1 PurQ and 2 PurS subunits.

It localises to the cytoplasm. It carries out the reaction N(2)-formyl-N(1)-(5-phospho-beta-D-ribosyl)glycinamide + L-glutamine + ATP + H2O = 2-formamido-N(1)-(5-O-phospho-beta-D-ribosyl)acetamidine + L-glutamate + ADP + phosphate + H(+). It catalyses the reaction L-glutamine + H2O = L-glutamate + NH4(+). It participates in purine metabolism; IMP biosynthesis via de novo pathway; 5-amino-1-(5-phospho-D-ribosyl)imidazole from N(2)-formyl-N(1)-(5-phospho-D-ribosyl)glycinamide: step 1/2. Functionally, part of the phosphoribosylformylglycinamidine synthase complex involved in the purines biosynthetic pathway. Catalyzes the ATP-dependent conversion of formylglycinamide ribonucleotide (FGAR) and glutamine to yield formylglycinamidine ribonucleotide (FGAM) and glutamate. The FGAM synthase complex is composed of three subunits. PurQ produces an ammonia molecule by converting glutamine to glutamate. PurL transfers the ammonia molecule to FGAR to form FGAM in an ATP-dependent manner. PurS interacts with PurQ and PurL and is thought to assist in the transfer of the ammonia molecule from PurQ to PurL. The polypeptide is Phosphoribosylformylglycinamidine synthase subunit PurQ (Exiguobacterium sibiricum (strain DSM 17290 / CCUG 55495 / CIP 109462 / JCM 13490 / 255-15)).